Consider the following 245-residue polypeptide: Carbohydrate deacetylase (245 aa).

Mg(2+)-binding residues include His-61 and His-122.

It belongs to the YdjC deacetylase family. Requires Mg(2+) as cofactor.

Probably catalyzes the deacetylation of acetylated carbohydrates an important step in the degradation of oligosaccharides. The protein is Carbohydrate deacetylase (celC) of Geobacillus stearothermophilus (Bacillus stearothermophilus).